Consider the following 654-residue polypeptide: Chaperone protein DnaK (654 aa).

Residue threonine 205 is modified to Phosphothreonine; by autocatalysis. Residues glutamate 592–proline 654 form a disordered region. The span at alanine 608–tyrosine 621 shows a compositional bias: polar residues. Residues glutamine 622–asparagine 636 are compositionally biased toward low complexity.

It belongs to the heat shock protein 70 family.

In terms of biological role, acts as a chaperone. The protein is Chaperone protein DnaK of Protochlamydia amoebophila (strain UWE25).